We begin with the raw amino-acid sequence, 466 residues long: Putative ABC transporter ATP-binding protein MG065 (466 aa).

Residues 233-463 (IELKNVYKYI…NLNPKQVEEI (231 aa)) enclose the ABC transporter domain. 269–276 (GPSGSGKT) contacts ATP.

This sequence belongs to the ABC transporter superfamily.

The polypeptide is Putative ABC transporter ATP-binding protein MG065 (Mycoplasma genitalium (strain ATCC 33530 / DSM 19775 / NCTC 10195 / G37) (Mycoplasmoides genitalium)).